The following is a 376-amino-acid chain: UPF0754 membrane protein Sca_1420 (376 aa).

2 helical membrane-spanning segments follow: residues 4–24 and 356–376; these read FLVI…TNII and LLGF…ALFV.

This sequence belongs to the UPF0754 family.

It is found in the cell membrane. The polypeptide is UPF0754 membrane protein Sca_1420 (Staphylococcus carnosus (strain TM300)).